The chain runs to 85 residues: uncharacterized protein (85 aa).

3 helical membrane passes run 4-24 (LTLC…LGGA), 27-47 (SPWL…LIGE), and 61-81 (RLLL…LYLA).

The protein localises to the cell membrane. This is an uncharacterized protein from Pseudomonas aeruginosa (strain ATCC 15692 / DSM 22644 / CIP 104116 / JCM 14847 / LMG 12228 / 1C / PRS 101 / PAO1).